Consider the following 202-residue polypeptide: Small ribosomal subunit protein uS4 (202 aa).

Positions 22 to 43 (TRKNARRAYPPGQHGQNRRKRS) are disordered. The S4 RNA-binding domain occupies 90–152 (MRLDNTVFRL…DKSRKLVQAN (63 aa)).

Belongs to the universal ribosomal protein uS4 family. As to quaternary structure, part of the 30S ribosomal subunit. Contacts protein S5. The interaction surface between S4 and S5 is involved in control of translational fidelity.

Functionally, one of the primary rRNA binding proteins, it binds directly to 16S rRNA where it nucleates assembly of the body of the 30S subunit. Its function is as follows. With S5 and S12 plays an important role in translational accuracy. The sequence is that of Small ribosomal subunit protein uS4 from Gloeothece citriformis (strain PCC 7424) (Cyanothece sp. (strain PCC 7424)).